Consider the following 156-residue polypeptide: 3-hydroxyacyl-[acyl-carrier-protein] dehydratase FabZ (156 aa).

His50 is an active-site residue.

Belongs to the thioester dehydratase family. FabZ subfamily.

The protein resides in the cytoplasm. The enzyme catalyses a (3R)-hydroxyacyl-[ACP] = a (2E)-enoyl-[ACP] + H2O. Involved in unsaturated fatty acids biosynthesis. Catalyzes the dehydration of short chain beta-hydroxyacyl-ACPs and long chain saturated and unsaturated beta-hydroxyacyl-ACPs. The chain is 3-hydroxyacyl-[acyl-carrier-protein] dehydratase FabZ from Janthinobacterium sp. (strain Marseille) (Minibacterium massiliensis).